A 200-amino-acid chain; its full sequence is Small ribosomal subunit protein uS4 (200 aa).

In terms of domain architecture, S4 RNA-binding spans 91-150 (TRLDNVVYRLGITPTRRSARQLVSHKHITVNGKIVNIPSYALKVGDIIGLTEKTKSSNAI).

Belongs to the universal ribosomal protein uS4 family. Part of the 30S ribosomal subunit. Contacts protein S5. The interaction surface between S4 and S5 is involved in control of translational fidelity.

Functionally, one of the primary rRNA binding proteins, it binds directly to 16S rRNA where it nucleates assembly of the body of the 30S subunit. With S5 and S12 plays an important role in translational accuracy. The chain is Small ribosomal subunit protein uS4 from Amoebophilus asiaticus (strain 5a2).